The following is a 943-amino-acid chain: Isoleucine--tRNA ligase (943 aa).

Residues 58 to 68 (PYANGSIHIGH) carry the 'HIGH' region motif. Glutamate 567 serves as a coordination point for L-isoleucyl-5'-AMP. A 'KMSKS' region motif is present at residues 608 to 612 (KMSKS). Residue lysine 611 coordinates ATP. Zn(2+)-binding residues include cysteine 906, cysteine 909, cysteine 926, and cysteine 929.

Belongs to the class-I aminoacyl-tRNA synthetase family. IleS type 1 subfamily. Monomer. It depends on Zn(2+) as a cofactor.

The protein resides in the cytoplasm. It carries out the reaction tRNA(Ile) + L-isoleucine + ATP = L-isoleucyl-tRNA(Ile) + AMP + diphosphate. Catalyzes the attachment of isoleucine to tRNA(Ile). As IleRS can inadvertently accommodate and process structurally similar amino acids such as valine, to avoid such errors it has two additional distinct tRNA(Ile)-dependent editing activities. One activity is designated as 'pretransfer' editing and involves the hydrolysis of activated Val-AMP. The other activity is designated 'posttransfer' editing and involves deacylation of mischarged Val-tRNA(Ile). This is Isoleucine--tRNA ligase from Pseudomonas fluorescens (strain ATCC BAA-477 / NRRL B-23932 / Pf-5).